We begin with the raw amino-acid sequence, 340 residues long: DNA-directed RNA polymerase subunit alpha (340 aa).

The alpha N-terminal domain (alpha-NTD) stretch occupies residues 1–236 (MLSLSKNWNT…EQLQLFIAFE (236 aa)). The interval 251-340 (FSPYLLKRVD…LSKRYEDSYN (90 aa)) is alpha C-terminal domain (alpha-CTD).

Belongs to the RNA polymerase alpha chain family. In terms of assembly, homodimer. The RNAP catalytic core consists of 2 alpha, 1 beta, 1 beta' and 1 omega subunit. When a sigma factor is associated with the core the holoenzyme is formed, which can initiate transcription.

It catalyses the reaction RNA(n) + a ribonucleoside 5'-triphosphate = RNA(n+1) + diphosphate. In terms of biological role, DNA-dependent RNA polymerase catalyzes the transcription of DNA into RNA using the four ribonucleoside triphosphates as substrates. This Rickettsia prowazekii (strain Madrid E) protein is DNA-directed RNA polymerase subunit alpha.